A 118-amino-acid chain; its full sequence is Large ribosomal subunit protein uL18 (118 aa).

It belongs to the universal ribosomal protein uL18 family. Part of the 50S ribosomal subunit; part of the 5S rRNA/L5/L18/L25 subcomplex. Contacts the 5S and 23S rRNAs.

Its function is as follows. This is one of the proteins that bind and probably mediate the attachment of the 5S RNA into the large ribosomal subunit, where it forms part of the central protuberance. This is Large ribosomal subunit protein uL18 from Campylobacter concisus (strain 13826).